Here is a 417-residue protein sequence, read N- to C-terminus: Serine hydroxymethyltransferase (417 aa).

(6S)-5,6,7,8-tetrahydrofolate contacts are provided by residues Leu-121 and 125-127 (GHL). Position 229 is an N6-(pyridoxal phosphate)lysine (Lys-229). A (6S)-5,6,7,8-tetrahydrofolate-binding site is contributed by 355-357 (SPF).

This sequence belongs to the SHMT family. Homodimer. It depends on pyridoxal 5'-phosphate as a cofactor.

It localises to the cytoplasm. It carries out the reaction (6R)-5,10-methylene-5,6,7,8-tetrahydrofolate + glycine + H2O = (6S)-5,6,7,8-tetrahydrofolate + L-serine. It functions in the pathway one-carbon metabolism; tetrahydrofolate interconversion. Its pathway is amino-acid biosynthesis; glycine biosynthesis; glycine from L-serine: step 1/1. Catalyzes the reversible interconversion of serine and glycine with tetrahydrofolate (THF) serving as the one-carbon carrier. This reaction serves as the major source of one-carbon groups required for the biosynthesis of purines, thymidylate, methionine, and other important biomolecules. Also exhibits THF-independent aldolase activity toward beta-hydroxyamino acids, producing glycine and aldehydes, via a retro-aldol mechanism. The chain is Serine hydroxymethyltransferase from Proteus mirabilis (strain HI4320).